The chain runs to 463 residues: 6-phosphofructo-2-kinase/fructose-2,6-bisphosphatase 3 (463 aa).

Residues 1 to 246 (MPLELTQSRV…VYYLMNIHWQ (246 aa)) are 6-phosphofructo-2-kinase. Position 42 to 50 (42 to 50 (GLPARGKTY)) interacts with ATP. Residues arginine 75 and arginine 99 each coordinate beta-D-fructose 6-phosphate. The active site involves aspartate 125. The beta-D-fructose 6-phosphate site is built by threonine 127 and arginine 133. The active site involves cysteine 155. ATP is bound at residue 164–169 (NIMEVK). Residues lysine 169, arginine 191, and tyrosine 195 each contribute to the beta-D-fructose 6-phosphate site. Positions 247–463 (PRTIYLCRHG…PNPLMRSNSH (217 aa)) are fructose-2,6-bisphosphatase. Beta-D-fructose 2,6-bisphosphate is bound at residue arginine 254. Histidine 255 (tele-phosphohistidine intermediate) is an active-site residue. Asparagine 261 and glycine 267 together coordinate beta-D-fructose 2,6-bisphosphate. Glutamate 324 (proton donor/acceptor) is an active-site residue. Tyrosine 335 serves as a coordination point for beta-D-fructose 2,6-bisphosphate. 346-349 (YALA) lines the ATP pocket. Beta-D-fructose 2,6-bisphosphate contacts are provided by lysine 353, tyrosine 364, and glutamine 390. Residues 390-394 (QAVCV) and tyrosine 426 each bind ATP. The disordered stretch occupies residues 444 to 463 (RERSEDAKKGPNPLMRSNSH). Position 462 is a phosphoserine; by AMPK and PKA (serine 462).

The protein in the C-terminal section; belongs to the phosphoglycerate mutase family. Homodimer. Forms a heterodimer with PFKFB2. Phosphorylation by AMPK stimulates activity. In terms of tissue distribution, brain.

The enzyme catalyses beta-D-fructose 2,6-bisphosphate + H2O = beta-D-fructose 6-phosphate + phosphate. The catalysed reaction is beta-D-fructose 6-phosphate + ATP = beta-D-fructose 2,6-bisphosphate + ADP + H(+). In terms of biological role, catalyzes both the synthesis and degradation of fructose 2,6-bisphosphate. The sequence is that of 6-phosphofructo-2-kinase/fructose-2,6-bisphosphatase 3 (PFKFB3) from Bos taurus (Bovine).